We begin with the raw amino-acid sequence, 1062 residues long: Valine--tRNA ligase, mitochondrial (1062 aa).

The N-terminal 15 residues, 1–15 (MPHLPLASFRPPLRG), are a transit peptide targeting the mitochondrion. A disordered region spans residues 1–73 (MPHLPLASFR…AKGKPPAEST (73 aa)). Residues 42–56 (RNREAKQKRLREKQA) are compositionally biased toward basic and acidic residues. The 'HIGH' region motif lies at 146–156 (PNVTGSLHIGH). Residues 659–663 (KMSKS) carry the 'KMSKS' region motif. K662 contacts ATP.

The protein belongs to the class-I aminoacyl-tRNA synthetase family.

The protein localises to the mitochondrion. It catalyses the reaction tRNA(Val) + L-valine + ATP = L-valyl-tRNA(Val) + AMP + diphosphate. Its function is as follows. Catalyzes the attachment of valine to tRNA(Val) in a two-step reaction: valine is first activated by ATP to form Val-AMP and then transferred to the acceptor end of tRNA(Val). The protein is Valine--tRNA ligase, mitochondrial (VARS2) of Sus scrofa (Pig).